The following is a 467-amino-acid chain: Glutamate--tRNA ligase (467 aa).

The 'HIGH' region signature appears at 9 to 19 (PSPTGYLHIGG). The short motif at 237-241 (KLSKR) is the 'KMSKS' region element. Lys-240 contributes to the ATP binding site.

The protein belongs to the class-I aminoacyl-tRNA synthetase family. Glutamate--tRNA ligase type 1 subfamily. Monomer.

It localises to the cytoplasm. The catalysed reaction is tRNA(Glu) + L-glutamate + ATP = L-glutamyl-tRNA(Glu) + AMP + diphosphate. In terms of biological role, catalyzes the attachment of glutamate to tRNA(Glu) in a two-step reaction: glutamate is first activated by ATP to form Glu-AMP and then transferred to the acceptor end of tRNA(Glu). The chain is Glutamate--tRNA ligase from Stenotrophomonas maltophilia (strain R551-3).